The sequence spans 142 residues: Hemoglobin subunit alpha (142 aa).

A Globin domain is found at 2–142; it reads VLSAADKTNV…VSTVLTSKYR (141 aa). Ser4 bears the Phosphoserine mark. The residue at position 8 (Lys8) is an N6-succinyllysine. Residue Thr9 is modified to Phosphothreonine. Lys12 is modified (N6-succinyllysine). Lys17 carries the post-translational modification N6-acetyllysine; alternate. N6-succinyllysine; alternate is present on Lys17. The residue at position 41 (Lys41) is an N6-succinyllysine. Phosphoserine is present on Ser50. His59 is an O2 binding site. A heme b-binding site is contributed by His88. Ser103 bears the Phosphoserine mark. Thr109 is subject to Phosphothreonine. Ser125 and Ser132 each carry phosphoserine. Phosphothreonine is present on residues Thr135 and Thr138. The residue at position 139 (Ser139) is a Phosphoserine.

This sequence belongs to the globin family. Heterotetramer of two alpha chains and two beta chains. In terms of tissue distribution, red blood cells.

Its function is as follows. Involved in oxygen transport from the lung to the various peripheral tissues. Hemopressin acts as an antagonist peptide of the cannabinoid receptor CNR1. Hemopressin-binding efficiently blocks cannabinoid receptor CNR1 and subsequent signaling. The sequence is that of Hemoglobin subunit alpha (HBA) from Equus przewalskii (Przewalski's horse).